We begin with the raw amino-acid sequence, 359 residues long: Threonine dehydratase biosynthetic, chloroplastic (359 aa).

2 ACT-like domains span residues 184–256 and 278–349; these read ALLA…NFSH and IFGE…LDNS.

Belongs to the serine/threonine dehydratase family. As to quaternary structure, homotetramer. Pyridoxal 5'-phosphate serves as cofactor. Floral buds of untreated plants. After ABA treatment or mechanical wounding is mostly accumulated in leaves, to a lesser extent in stems, but not in roots. Expressed in anthers, carpel leaves, pith cells, sepals and petals. Not expressed in stomium, vascular bundles, epidermal cells or pollen mother cells.

It localises to the plastid. It is found in the chloroplast. The catalysed reaction is L-threonine = 2-oxobutanoate + NH4(+). The protein operates within amino-acid biosynthesis; L-isoleucine biosynthesis; 2-oxobutanoate from L-threonine: step 1/1. The polypeptide is Threonine dehydratase biosynthetic, chloroplastic (Solanum tuberosum (Potato)).